The chain runs to 312 residues: Eukaryotic translation initiation factor 2 subunit 2 (312 aa).

2 disordered regions span residues 26–104 (AALG…NLDM) and 125–146 (ADQA…SSTW). Serine 44 is modified (phosphoserine). Composition is skewed to acidic residues over residues 90–102 (AASE…EINL) and 125–142 (ADQA…DEDN). Serine 133 carries the phosphoserine modification. Threonine 145 carries the post-translational modification Phosphothreonine. Residues 260-284 (CHTCRSPETILQKDTRLFFLQCESC) form a C4-type zinc finger.

The protein belongs to the eIF-2-beta/eIF-5 family. As to quaternary structure, eukaryotic translation initiation factor 2 eIF2 is a heterotrimeric complex composed of an alpha, a beta and a gamma subunit.

Its subcellular location is the cytoplasm. It is found in the cytosol. Functionally, component of the eIF2 complex that functions in the early steps of protein synthesis by forming a ternary complex with GTP and initiator tRNA. This complex binds to a 40S ribosomal subunit, followed by mRNA binding to form a 43S pre-initiation complex (43S PIC). Junction of the 60S ribosomal subunit to form the 80S initiation complex is preceded by hydrolysis of the GTP bound to eIF2 and release of an eIF2-GDP binary complex. In order for eIF2 to recycle and catalyze another round of initiation, the GDP bound to eIF2 must exchange with GTP by way of a reaction catalyzed by eIF2B. The sequence is that of Eukaryotic translation initiation factor 2 subunit 2 from Drosophila melanogaster (Fruit fly).